We begin with the raw amino-acid sequence, 184 residues long: Protein GrpE (184 aa).

A compositionally biased stretch (basic and acidic residues) spans 1–12; it reads MADEQLNEKDLN. The segment at 1 to 22 is disordered; sequence MADEQLNEKDLNAEEAGAVDNG.

Belongs to the GrpE family. As to quaternary structure, homodimer.

The protein resides in the cytoplasm. Its function is as follows. Participates actively in the response to hyperosmotic and heat shock by preventing the aggregation of stress-denatured proteins, in association with DnaK and GrpE. It is the nucleotide exchange factor for DnaK and may function as a thermosensor. Unfolded proteins bind initially to DnaJ; upon interaction with the DnaJ-bound protein, DnaK hydrolyzes its bound ATP, resulting in the formation of a stable complex. GrpE releases ADP from DnaK; ATP binding to DnaK triggers the release of the substrate protein, thus completing the reaction cycle. Several rounds of ATP-dependent interactions between DnaJ, DnaK and GrpE are required for fully efficient folding. The sequence is that of Protein GrpE from Pseudomonas putida (strain W619).